The chain runs to 532 residues: Bone morphogenetic protein receptor type-1A (532 aa).

Positions 1-23 are cleaved as a signal peptide; it reads MPQLYIYIRLLGAYLFIISRVQG. The Extracellular segment spans residues 24–152; that stretch reads QNLDSMLHGT…IGPFFDGSIR (129 aa). 3 disulfides stabilise this stretch: cysteine 61-cysteine 82, cysteine 63-cysteine 67, and cysteine 76-cysteine 100. A glycan (N-linked (GlcNAc...) asparagine) is linked at asparagine 73. The interval 107–109 is mediates specificity for BMP ligand; it reads DFQ. 2 cysteine pairs are disulfide-bonded: cysteine 110/cysteine 124 and cysteine 125/cysteine 130. A helical transmembrane segment spans residues 153–176; sequence WLVLLISMAVCIIAMIIFSSCFCY. Over 177–532 the chain is Cytoplasmic; the sequence is KHYCKSISSR…KMVESQDVKI (356 aa). The 30-residue stretch at 204 to 233 folds into the GS domain; it reads ESLKDLIDQSQSSGSGSGLPLLVQRTIAKQ. The region spanning 234–525 is the Protein kinase domain; the sequence is IQMVRQVGKG…RIKKTLAKMV (292 aa). ATP contacts are provided by residues 240-248 and lysine 261; that span reads VGKGRYGEV. The Proton acceptor role is filled by aspartate 362.

It belongs to the protein kinase superfamily. TKL Ser/Thr protein kinase family. TGFB receptor subfamily. In terms of assembly, interacts with low affinity with GDF5; positively regulates chondrocyte differentiation. Interacts with BMP4. Interacts with SCUBE3. Interacts with TSC22D1/TSC-22. Interacts with BMP2; the interaction may induce HAMP expression. Interacts with BMP6. Interacts with heterodimers composed of BMP2 and BMP6 in vitro; the interaction may induce HAMP expression. Interacts with TGFBR3. The cofactor is Mg(2+). Mn(2+) is required as a cofactor. Post-translationally, glycosylated. In terms of tissue distribution, highly expressed in skeletal muscle.

The protein localises to the cell membrane. Its subcellular location is the cell surface. It carries out the reaction L-threonyl-[receptor-protein] + ATP = O-phospho-L-threonyl-[receptor-protein] + ADP + H(+). The catalysed reaction is L-seryl-[receptor-protein] + ATP = O-phospho-L-seryl-[receptor-protein] + ADP + H(+). On ligand binding, forms a receptor complex consisting of two type II and two type I transmembrane serine/threonine kinases. Type II receptors phosphorylate and activate type I receptors which autophosphorylate, then bind and activate SMAD transcriptional regulators. Receptor for BMP2, BMP4, GDF5 and GDF6. Positively regulates chondrocyte differentiation through GDF5 interaction. Mediates induction of adipogenesis by GDF6. May promote the expression of HAMP, potentially via its interaction with BMP2. This Homo sapiens (Human) protein is Bone morphogenetic protein receptor type-1A (BMPR1A).